A 151-amino-acid polypeptide reads, in one-letter code: FIS1-related protein fis-2 (151 aa).

A helical transmembrane segment spans residues 126–146 (LIGAAIVGGGALALAGLVAIF).

This sequence belongs to the FIS1 family.

Its subcellular location is the mitochondrion outer membrane. The protein localises to the peroxisome membrane. The protein resides in the mitochondrion. Functionally, involved in the fragmentation of the mitochondrial network. Involved in perinuclear clustering of the mitochondrial network. May act, redundantly with fis-1, downstream of mitochondrial fission, before the fission products participate in mitochondrial homeostasis, mitophagy, or apoptosis. Plays a role in apoptosis by promoting mitochondrial elimination and cell-death execution, acting downstream of caspase ced-3, and perhaps independently of dynamin GTPase drp-1, caspase ced-9 and apoptosis-inducing factor AIFM/wah-1. This Caenorhabditis elegans protein is FIS1-related protein fis-2.